A 199-amino-acid chain; its full sequence is dITP/XTP pyrophosphatase (199 aa).

8–13 (THNRNK) serves as a coordination point for substrate. Aspartate 68 (proton acceptor) is an active-site residue. Aspartate 68 contributes to the Mg(2+) binding site. Substrate contacts are provided by residues serine 69, 151-154 (HGYD), lysine 174, and 179-180 (HR).

It belongs to the HAM1 NTPase family. In terms of assembly, homodimer. Mg(2+) is required as a cofactor.

It carries out the reaction XTP + H2O = XMP + diphosphate + H(+). The enzyme catalyses dITP + H2O = dIMP + diphosphate + H(+). The catalysed reaction is ITP + H2O = IMP + diphosphate + H(+). Functionally, pyrophosphatase that catalyzes the hydrolysis of nucleoside triphosphates to their monophosphate derivatives, with a high preference for the non-canonical purine nucleotides XTP (xanthosine triphosphate), dITP (deoxyinosine triphosphate) and ITP. Seems to function as a house-cleaning enzyme that removes non-canonical purine nucleotides from the nucleotide pool, thus preventing their incorporation into DNA/RNA and avoiding chromosomal lesions. This Leifsonia xyli subsp. xyli (strain CTCB07) protein is dITP/XTP pyrophosphatase.